A 305-amino-acid chain; its full sequence is tRNA dimethylallyltransferase (305 aa).

Position 9-16 (9-16 (GPTASGKS)) interacts with ATP. A substrate-binding site is contributed by 11 to 16 (TASGKS). Residues 34 to 37 (DSKQ) are interaction with substrate tRNA.

Belongs to the IPP transferase family. As to quaternary structure, monomer. Mg(2+) is required as a cofactor.

The catalysed reaction is adenosine(37) in tRNA + dimethylallyl diphosphate = N(6)-dimethylallyladenosine(37) in tRNA + diphosphate. In terms of biological role, catalyzes the transfer of a dimethylallyl group onto the adenine at position 37 in tRNAs that read codons beginning with uridine, leading to the formation of N6-(dimethylallyl)adenosine (i(6)A). The polypeptide is tRNA dimethylallyltransferase (Anaplasma marginale (strain St. Maries)).